A 666-amino-acid polypeptide reads, in one-letter code: MSSFLVQTAVVRLFLLGVVFWFPFALSSSCAEIASKFGTWKSEGDAPPSYLSPTVDLLDGLDRIRKKIINGTISSQYDFDNLLHRLISQANDGHLQIGLCSREIFRFQHGTPLTSVSRDGLDLPQLYVHSDAVIMHSGQVEAISPVVEINGLEADYYLQSRIAVTLGYQDPDARYNALFPSPSAGFTGTYSAGAWASNSGEWPGSAVLTIRFANGTRLEVKPTATWPATNGPMNYTDGQALFEAACLPGTSSKYIFGSFPGMYLGLPAYELPRSGPSVFPAPTIKDSNGLVRLYSLEDAALQDVAVLQITSFRMGGEDSREFSATIRQSLDWASSHGKTKLLLDLSGNGGGNVIPGFDLFRMLFPDEPIRSETRFRSTELLDVLGQAFSAEYRGADAKEILDPPLAAQNAVSPDQEENVFGSWKDLFGPDPNYEGDSMSNAYAVFSFAAASTTFEPISGYGSAPLAIKTRLFEPQSIAVVTDGRCSSTCAIVVGLLQAQGVRTVTFGGRPRKAPMQAVGGVKGGQRWSLRTISRHIKTARELLAKQYTSTAAQANSTRRLAVGHLLQKLNDLAPPALPLIPRMEDNEWEFALRFDTYGQSSVNFRDAYVPANETTPWQFIYEAADCRMFLTPENVVEPASRWNSAARAMFGGREMGSEKCVDYVSV.

The first 27 residues, 1–27, serve as a signal peptide directing secretion; the sequence is MSSFLVQTAVVRLFLLGVVFWFPFALS. Residues N70, N214, and N234 are each glycosylated (N-linked (GlcNAc...) asparagine). Positions 303–504 are peptidase S41 domain; that stretch reads DVAVLQITSF…LLQAQGVRTV (202 aa). Residues N555 and N612 are each glycosylated (N-linked (GlcNAc...) asparagine).

Belongs to the peptidase S41A family.

It functions in the pathway mycotoxin biosynthesis. Functionally, peptidase S41 family protein; part of the gene cluster that mediates the biosynthesis of the phomopsins, a group of hexapeptide mycotoxins which infects lupins and causes lupinosis disease in livestock. Within the pathway, phomP1 and phomP1' are probably involved in the processing of the phomA and phomA' precursors. The pathway starts with the processing of the precursor phomA by several endopeptidases including kexin proteases as well as the cluster-specific S41 family peptidase phomP1 and the oligopeptidase phomG to produce 10 identical copies of the hexapeptide Tyr-Val-Ile-Pro-Ile-Asp. After being excised from the precursor peptide, the core peptides are cyclized and modified post-translationally by enzymes encoded within the gene cluster. The timing and order of proteolysis of the phomA precursor and PTMs are still unknown. Two tyrosinase-like enzymes, phomQ1 and phomQ2, catalyze the chlorination and hydroxylation of Tyr, respectively. PhomYb, is proposed to be involved in the construction of the macrocyclic structure. The other 4 ustYa family proteins may be involved in PTMs that generate the unique structure of phomopsin A. PhomYa is required for the hydroxylation of C-beta of Tyr. PhomYc, phomYd, and phomYe are responsible for the biosynthesis of 2,3-dehydroisoleucine (dIle), 2,3-dehydroaspartic acid (dAsp), and 3,4-dehydroproline (dPro), respectively. While dIle formation by phomYc is indispensable for the installation of dAsp by phomYd, the order of the other PTMs have not been elucidated yet. Most of the biosynthetic enzymes likely have broad substrate specificity, and thus, there might be a metabolic grid from a precursor to phomopsin A. The enzyme(s) responsible for the biosynthesis of 3,4-dehydrovaline (dVal) have also not been identified yet. Finally, phomM acts as an S-adenosylmethionine-dependent alpha-N-methyltransferase that catalyzes two successive N-methylation reactions, converting N-desmethyl-phomopsin A to phomopsin A and phomopsin A further to an N,N-dimethylated congener called phomopsin E. This chain is Peptidase S41 family protein phomP1', found in Diaporthe leptostromiformis (Lupinosis disease fungus).